A 143-amino-acid chain; its full sequence is Probable cyclic pyranopterin monophosphate synthase (143 aa).

Substrate is bound by residues 61-63 and 97-98; these read MCH and ME. Residue aspartate 112 is part of the active site.

Belongs to the MoaC family. As to quaternary structure, homohexamer; trimer of dimers.

It carries out the reaction (8S)-3',8-cyclo-7,8-dihydroguanosine 5'-triphosphate = cyclic pyranopterin phosphate + diphosphate. It functions in the pathway cofactor biosynthesis; molybdopterin biosynthesis. In terms of biological role, catalyzes the conversion of (8S)-3',8-cyclo-7,8-dihydroguanosine 5'-triphosphate to cyclic pyranopterin monophosphate (cPMP). In Sulfolobus acidocaldarius (strain ATCC 33909 / DSM 639 / JCM 8929 / NBRC 15157 / NCIMB 11770), this protein is Probable cyclic pyranopterin monophosphate synthase.